The primary structure comprises 475 residues: Sulfate adenylyltransferase subunit 1 (475 aa).

The tr-type G domain maps to 25 to 239 (KSLLRFLTCG…EVLETVEIQR (215 aa)). Residues 34-41 (GSVDDGKS) form a G1 region. 34–41 (GSVDDGKS) contacts GTP. The interval 92–96 (GITID) is G2. The interval 113-116 (DTPG) is G3. Residues 113–117 (DTPGH) and 168–171 (NKMD) each bind GTP. A G4 region spans residues 168–171 (NKMD). A G5 region spans residues 206-208 (SAL).

The protein belongs to the TRAFAC class translation factor GTPase superfamily. Classic translation factor GTPase family. CysN/NodQ subfamily. Heterodimer composed of CysD, the smaller subunit, and CysN.

The catalysed reaction is sulfate + ATP + H(+) = adenosine 5'-phosphosulfate + diphosphate. Its pathway is sulfur metabolism; hydrogen sulfide biosynthesis; sulfite from sulfate: step 1/3. In terms of biological role, with CysD forms the ATP sulfurylase (ATPS) that catalyzes the adenylation of sulfate producing adenosine 5'-phosphosulfate (APS) and diphosphate, the first enzymatic step in sulfur assimilation pathway. APS synthesis involves the formation of a high-energy phosphoric-sulfuric acid anhydride bond driven by GTP hydrolysis by CysN coupled to ATP hydrolysis by CysD. The sequence is that of Sulfate adenylyltransferase subunit 1 from Escherichia coli O9:H4 (strain HS).